The following is a 309-amino-acid chain: Pantoate--beta-alanine ligase (309 aa).

The protein belongs to the pantothenate synthetase family.

It is found in the cytoplasm. Its subcellular location is the nucleus. The enzyme catalyses (R)-pantoate + beta-alanine + ATP = (R)-pantothenate + AMP + diphosphate + H(+). Its pathway is cofactor biosynthesis; (R)-pantothenate biosynthesis; (R)-pantothenate from (R)-pantoate and beta-alanine: step 1/1. Required for pantothenic acid biosynthesis. The sequence is that of Pantoate--beta-alanine ligase (PAN6) from Saccharomyces cerevisiae (strain ATCC 204508 / S288c) (Baker's yeast).